Consider the following 122-residue polypeptide: Large ribosomal subunit protein uL14 (122 aa).

It belongs to the universal ribosomal protein uL14 family. Part of the 50S ribosomal subunit. Forms a cluster with proteins L3 and L19. In the 70S ribosome, L14 and L19 interact and together make contacts with the 16S rRNA in bridges B5 and B8.

Binds to 23S rRNA. Forms part of two intersubunit bridges in the 70S ribosome. This Geobacillus kaustophilus (strain HTA426) protein is Large ribosomal subunit protein uL14.